The chain runs to 122 residues: Large ribosomal subunit protein uL14 (122 aa).

The protein belongs to the universal ribosomal protein uL14 family. In terms of assembly, part of the 50S ribosomal subunit. Forms a cluster with proteins L3 and L19. In the 70S ribosome, L14 and L19 interact and together make contacts with the 16S rRNA in bridges B5 and B8.

Its function is as follows. Binds to 23S rRNA. Forms part of two intersubunit bridges in the 70S ribosome. In Salinibacter ruber (strain DSM 13855 / M31), this protein is Large ribosomal subunit protein uL14.